A 393-amino-acid polypeptide reads, in one-letter code: Putative N(4)-(beta-N-acetylglucosaminyl)-L-asparaginase GH22932 (393 aa).

Positions 15 to 41 (ALKPITNSSSDTITPNPNLITTSRGSS) are disordered. Over residues 19–41 (ITNSSSDTITPNPNLITTSRGSS) the composition is skewed to polar residues. Intrachain disulfides connect Cys-100/Cys-105 and Cys-199/Cys-215. Thr-246 serves as the catalytic Nucleophile. Substrate is bound by residues 274–277 (RVGD) and 297–300 (TGDG). A disulfide bridge links Cys-357 with Cys-381.

It belongs to the Ntn-hydrolase family. As to quaternary structure, heterotetramer of two alpha and two beta chains arranged as a dimer of alpha/beta heterodimers. Post-translationally, cleaved into an alpha and beta chain by autocatalysis; this activates the enzyme. The N-terminal residue of the beta subunit is responsible for the nucleophile hydrolase activity.

The catalysed reaction is N(4)-(beta-N-acetyl-D-glucosaminyl)-L-asparagine + H2O = N-acetyl-beta-D-glucosaminylamine + L-aspartate + H(+). Cleaves the GlcNAc-Asn bond which joins oligosaccharides to the peptide of asparagine-linked glycoproteins. In Drosophila grimshawi (Hawaiian fruit fly), this protein is Putative N(4)-(beta-N-acetylglucosaminyl)-L-asparaginase GH22932.